An 84-amino-acid chain; its full sequence is Defensin-like protein 199 (84 aa).

The N-terminal stretch at 1-24 (MAITMRTLVAFVFTIFFIISFVHS) is a signal peptide. 4 cysteine pairs are disulfide-bonded: Cys-40/Cys-80, Cys-47/Cys-72, Cys-56/Cys-78, and Cys-60/Cys-79.

This sequence belongs to the DEFL family.

The protein resides in the secreted. The chain is Defensin-like protein 199 from Arabidopsis thaliana (Mouse-ear cress).